We begin with the raw amino-acid sequence, 289 residues long: Purine nucleoside phosphorylase (289 aa).

N-acetylmethionine is present on methionine 1. Phosphate is bound by residues serine 33, histidine 64, and 84 to 86 (RFH). Tyrosine 88 lines the a purine D-ribonucleoside pocket. Residue alanine 116 participates in phosphate binding. A purine D-ribonucleoside is bound by residues glutamate 201 and methionine 219. Residue serine 220 participates in phosphate binding. A purine D-ribonucleoside is bound at residue asparagine 243. A Phosphoserine modification is found at serine 251. Histidine 257 serves as a coordination point for a purine D-ribonucleoside.

The protein belongs to the PNP/MTAP phosphorylase family. Homotrimer.

It is found in the cytoplasm. The enzyme catalyses inosine + phosphate = alpha-D-ribose 1-phosphate + hypoxanthine. It carries out the reaction guanosine + phosphate = alpha-D-ribose 1-phosphate + guanine. The catalysed reaction is 2'-deoxyguanosine + phosphate = 2-deoxy-alpha-D-ribose 1-phosphate + guanine. It catalyses the reaction 2'-deoxyinosine + phosphate = 2-deoxy-alpha-D-ribose 1-phosphate + hypoxanthine. The protein operates within purine metabolism; purine nucleoside salvage. In terms of biological role, catalyzes the phosphorolytic breakdown of the N-glycosidic bond in the beta-(deoxy)ribonucleoside molecules, with the formation of the corresponding free purine bases and pentose-1-phosphate. Preferentially acts on 6-oxopurine nucleosides including inosine and guanosine. The polypeptide is Purine nucleoside phosphorylase (PNP) (Bos taurus (Bovine)).